The chain runs to 528 residues: MAIVETVIDGINYFLSLSVTQQISILLGVPFVYNLVWQYLYSLRKDRAPLVFYWIPWFGSAASYGQQPYEFFESCRQKYGDVFSFMLLGKIMTVYLGPKGHEFVFNAKLSDVSAEDAYKHLTTPVFGKGVIYDCPNSRLMEQKKFAKFALTTDSFKRYVPKIREEILNYFVTDESFKLKEKTHGVANVMKTQPEITIFTASRSLFGDEMRRIFDRSFAQLYSDLDKGFTPINFVFPNLPLPHYWRRDAAQKKISATYMKEIKSRRERGDIDPNRDLIDSLLIHSTYKDGVKMTDQEIANLLIGILMGGQHTSASTSAWFLLHLGEKPHLQDVIYQEVVELLKEKGGDLNDLTYEDLQKLPSVNNTIKETLRMHMPLHSIFRKVTNPLRIPETNYIVPKGHYVLVSPGYAHTSERYFDNPEDFDPTRWDTAAAKANSVSFNSSDEVDYGFGKVSKGVSSPYLPFGGGRHRCIGEQFAYVQLGTILTTFVYNLRWTIDGYKVPDPDYSSMVVLPTEPAEIIWEKRETCMF.

A helical membrane pass occupies residues 15 to 37; that stretch reads LSLSVTQQISILLGVPFVYNLVW. Tyr64 provides a ligand contact to oteseconazole. Tyr118 contributes to the itraconazole binding site. Gly307 contributes to the posaconazole binding site. His377 is an oteseconazole binding site. Residue Cys470 participates in heme binding.

This sequence belongs to the cytochrome P450 family. The cofactor is heme.

Its subcellular location is the endoplasmic reticulum membrane. It carries out the reaction a 14alpha-methyl steroid + 3 reduced [NADPH--hemoprotein reductase] + 3 O2 = a Delta(14) steroid + formate + 3 oxidized [NADPH--hemoprotein reductase] + 4 H2O + 4 H(+). It catalyses the reaction a 14alpha-methyl steroid + reduced [NADPH--hemoprotein reductase] + O2 = a 14alpha-hydroxymethyl steroid + oxidized [NADPH--hemoprotein reductase] + H2O + H(+). The enzyme catalyses a 14alpha-hydroxymethyl steroid + reduced [NADPH--hemoprotein reductase] + O2 = a 14alpha-formyl steroid + oxidized [NADPH--hemoprotein reductase] + 2 H2O + H(+). The catalysed reaction is a 14alpha-formyl steroid + reduced [NADPH--hemoprotein reductase] + O2 = a Delta(14) steroid + formate + oxidized [NADPH--hemoprotein reductase] + H2O + 2 H(+). It carries out the reaction lanosterol + 3 reduced [NADPH--hemoprotein reductase] + 3 O2 = 4,4-dimethyl-5alpha-cholesta-8,14,24-trien-3beta-ol + formate + 3 oxidized [NADPH--hemoprotein reductase] + 4 H2O + 4 H(+). It catalyses the reaction lanosterol + reduced [NADPH--hemoprotein reductase] + O2 = 32-hydroxylanosterol + oxidized [NADPH--hemoprotein reductase] + H2O + H(+). The enzyme catalyses 32-hydroxylanosterol + reduced [NADPH--hemoprotein reductase] + O2 = 32-oxolanosterol + oxidized [NADPH--hemoprotein reductase] + 2 H2O + H(+). The catalysed reaction is 32-oxolanosterol + reduced [NADPH--hemoprotein reductase] + O2 = 4,4-dimethyl-5alpha-cholesta-8,14,24-trien-3beta-ol + formate + oxidized [NADPH--hemoprotein reductase] + H2O + 2 H(+). It carries out the reaction eburicol + 3 reduced [NADPH--hemoprotein reductase] + 3 O2 = 14-demethyleburicol + formate + 3 oxidized [NADPH--hemoprotein reductase] + 4 H2O + 4 H(+). It catalyses the reaction eburicol + reduced [NADPH--hemoprotein reductase] + O2 = 32-hydroxyeburicol + oxidized [NADPH--hemoprotein reductase] + H2O + H(+). The enzyme catalyses 32-hydroxyeburicol + reduced [NADPH--hemoprotein reductase] + O2 = 32-oxoeburicol + oxidized [NADPH--hemoprotein reductase] + 2 H2O + H(+). The catalysed reaction is 32-oxoeburicol + reduced [NADPH--hemoprotein reductase] + O2 = 14-demethyleburicol + formate + oxidized [NADPH--hemoprotein reductase] + H2O + 2 H(+). The protein operates within steroid biosynthesis; zymosterol biosynthesis; zymosterol from lanosterol: step 1/6. Its activity is regulated as follows. The catalytic activity is inhibited by the binding of azoles clotrimazole, miconazole, fluconazole, ketoconazole, oteseconazole (VT-1161), tetraconazole, the triazole SCH39304, and the triazole derivative ICI 153066. In terms of biological role, sterol 14alpha-demethylase that plays a critical role in the third module of ergosterol biosynthesis pathway, being ergosterol the major sterol component in fungal membranes that participates in a variety of functions. The third module or late pathway involves the ergosterol synthesis itself through consecutive reactions that mainly occur in the endoplasmic reticulum (ER) membrane. In filamentous fungi, during the initial step of this module, lanosterol (lanosta-8,24-dien-3beta-ol) can be metabolized to eburicol. Sterol 14alpha-demethylase catalyzes the three-step oxidative removal of the 14alpha-methyl group (C-32) of both these sterols in the form of formate, and converts eburicol and lanosterol to 14-demethyleburicol (4,4,24-trimethylergosta-8,14,24(28)-trienol) and 4,4-dimethyl-5alpha-cholesta-8,14,24-trien-3beta-ol, respectively, which are further metabolized by other enzymes in the pathway to ergosterol. Can also use substrates not intrinsic to fungi, such as 24,25-dihydrolanosterol (DHL), producing 4,4-dimethyl-8,14-cholestadien-3-beta-ol, but at lower rates than the endogenous substrates. This is Lanosterol 14-alpha demethylase from Candida albicans (strain SC5314 / ATCC MYA-2876) (Yeast).